The primary structure comprises 353 residues: Protein RecA (353 aa).

68-75 (GPESSGKT) is a binding site for ATP.

It belongs to the RecA family.

The protein localises to the cytoplasm. Its function is as follows. Can catalyze the hydrolysis of ATP in the presence of single-stranded DNA, the ATP-dependent uptake of single-stranded DNA by duplex DNA, and the ATP-dependent hybridization of homologous single-stranded DNAs. It interacts with LexA causing its activation and leading to its autocatalytic cleavage. In Roseiflexus sp. (strain RS-1), this protein is Protein RecA.